Consider the following 98-residue polypeptide: NADH-ubiquinone oxidoreductase chain 4L (98 aa).

3 consecutive transmembrane segments (helical) span residues Met1–Met21, Leu31–Ile51, and Ile61–Val81.

Belongs to the complex I subunit 4L family. In terms of assembly, core subunit of respiratory chain NADH dehydrogenase (Complex I) which is composed of 45 different subunits.

It is found in the mitochondrion inner membrane. The enzyme catalyses a ubiquinone + NADH + 5 H(+)(in) = a ubiquinol + NAD(+) + 4 H(+)(out). Its function is as follows. Core subunit of the mitochondrial membrane respiratory chain NADH dehydrogenase (Complex I) which catalyzes electron transfer from NADH through the respiratory chain, using ubiquinone as an electron acceptor. Part of the enzyme membrane arm which is embedded in the lipid bilayer and involved in proton translocation. This Chalinolobus tuberculatus (New Zealand long-tailed bat) protein is NADH-ubiquinone oxidoreductase chain 4L (MT-ND4L).